Here is a 358-residue protein sequence, read N- to C-terminus: Fructose-bisphosphate aldolase 1, cytoplasmic (358 aa).

Arginine 39 contributes to the substrate binding site. The active-site Proton acceptor is the glutamate 183. Lysine 225 (schiff-base intermediate with dihydroxyacetone-P) is an active-site residue. Residues 266-268 (SGG) and arginine 298 each bind substrate.

This sequence belongs to the class I fructose-bisphosphate aldolase family. In terms of assembly, homotetramer. As to expression, expressed in callus.

It localises to the cytoplasm. The protein resides in the cytosol. The enzyme catalyses beta-D-fructose 1,6-bisphosphate = D-glyceraldehyde 3-phosphate + dihydroxyacetone phosphate. It functions in the pathway carbohydrate degradation; glycolysis; D-glyceraldehyde 3-phosphate and glycerone phosphate from D-glucose: step 4/4. Functionally, fructose-bisphosphate aldolase that plays a key role in glycolysis and gluconeogenesis. Involved in gibberellin-mediated root growth. May be regulated by CDPK13. Associates with vacuolar proton ATPase (V-ATPase) and may regulate the V-ATPase-mediated control of root cell elongation. In Oryza sativa subsp. japonica (Rice), this protein is Fructose-bisphosphate aldolase 1, cytoplasmic.